The following is a 492-amino-acid chain: N-succinylglutamate 5-semialdehyde dehydrogenase (492 aa).

Gly220–Gly225 contributes to the NAD(+) binding site. Active-site residues include Glu243 and Cys277.

Belongs to the aldehyde dehydrogenase family. AstD subfamily.

It catalyses the reaction N-succinyl-L-glutamate 5-semialdehyde + NAD(+) + H2O = N-succinyl-L-glutamate + NADH + 2 H(+). It participates in amino-acid degradation; L-arginine degradation via AST pathway; L-glutamate and succinate from L-arginine: step 4/5. Its function is as follows. Catalyzes the NAD-dependent reduction of succinylglutamate semialdehyde into succinylglutamate. This is N-succinylglutamate 5-semialdehyde dehydrogenase from Salmonella gallinarum (strain 287/91 / NCTC 13346).